We begin with the raw amino-acid sequence, 128 residues long: Fluoride-specific ion channel FluC (128 aa).

4 helical membrane-spanning segments follow: residues 7-27, 34-54, 70-90, and 104-124; these read AVLL…LIAV, TGFP…IGMI, LLLA…MYEI, and LYLI…MALA. Residues Gly-78 and Thr-81 each contribute to the Na(+) site.

Belongs to the fluoride channel Fluc/FEX (TC 1.A.43) family.

The protein resides in the cell inner membrane. It carries out the reaction fluoride(in) = fluoride(out). Na(+) is not transported, but it plays an essential structural role and its presence is essential for fluoride channel function. In terms of biological role, fluoride-specific ion channel. Important for reducing fluoride concentration in the cell, thus reducing its toxicity. The sequence is that of Fluoride-specific ion channel FluC from Prosthecochloris aestuarii (strain DSM 271 / SK 413).